The following is an 81-amino-acid chain: Control protein C.BamHI (81 aa).

One can recognise an HTH cro/C1-type domain in the interval 13-68; it reads VRQIRLSKSNMSQEKLAFECDLHRTYISDIERGTRNVSLDNIEKISKALGVQPKDL. Positions 25–44 form a DNA-binding region, H-T-H motif; it reads QEKLAFECDLHRTYISDIER.

Its function is as follows. May help modulate methylase (M) and restriction enzyme (R) expression as cells undergo physiological changes such as sporulation or transformation. The sequence is that of Control protein C.BamHI from Bacillus amyloliquefaciens (Bacillus velezensis).